The sequence spans 29 residues: Lambda-theraphotoxin-Ec2c (29 aa).

Intrachain disulfides connect C2/C16, C9/C21, and C15/C25.

Belongs to the neurotoxin 30 (phrixotoxin) family. Expressed by the venom gland.

It is found in the secreted. In terms of biological role, both insecticidal and vertebrate neurotoxin that potently blocks insect calcium-activated potassium (BKCa) channels (Slo-type) in cockroach dorsal unpaired median (DUM) neurons (IC(50)=24.6 nM). This occurs in the absence of any shifts in the voltage dependence of activation. May interact with the turret and/or loop region of the external entrance to the channel and does not project deeply into the pore of the channel. Also shows toxicity to mice by introcerebroventicular injection. This is Lambda-theraphotoxin-Ec2c from Eucratoscelus constrictus (African red-rump baboon spider).